A 309-amino-acid polypeptide reads, in one-letter code: MSFQDRTAEFQACVTKTRSRLRTTTANQAVGGPDQTKHQKSEFTRIAQKIANQINQTGEKLQKLSQLAKRKTLFDDRPVEIQELTFQIKQSLSSLNSDIASLQQVVKGNRNKPAQMNQHSENVVVSLQNSLANTSMTFKDILEIRTQNMKASQNRTEKFVASSSMNANPLINSGNSISPFADYNDPKPEANEDYLSLNLGDGANTRYEQMALLESQTDTYSQQRMSSIQNIESTITELGGIFSQLAQMVSEQRETVQRIDMHTDDIVSNIGSAQREIVKFYERMSSNRALLFKIFGIVIIFFLLWVLVT.

The Cytoplasmic segment spans residues 1–288 (MSFQDRTAEF…KFYERMSSNR (288 aa)). A coiled-coil region spans residues 37-66 (KHQKSEFTRIAQKIANQINQTGEKLQKLSQ). Residues 218–280 (DTYSQQRMSS…GSAQREIVKF (63 aa)) enclose the t-SNARE coiled-coil homology domain. A helical; Anchor for type IV membrane protein transmembrane segment spans residues 289 to 308 (ALLFKIFGIVIIFFLLWVLV). Threonine 309 is a topological domain (vesicular).

The protein belongs to the syntaxin family.

It is found in the membrane. The protein localises to the golgi apparatus membrane. In terms of biological role, required for vesicular transport between the endoplasmic reticulum and the Golgi complex. Acts as a target organelle soluble NSF attachment protein receptor (t-SNARE). This chain is Integral membrane protein sed5 (sed5), found in Schizosaccharomyces pombe (strain 972 / ATCC 24843) (Fission yeast).